The primary structure comprises 501 residues: Lysine--tRNA ligase (501 aa).

Glu402 and Glu409 together coordinate Mg(2+).

It belongs to the class-II aminoacyl-tRNA synthetase family. In terms of assembly, homodimer. It depends on Mg(2+) as a cofactor.

It is found in the cytoplasm. The catalysed reaction is tRNA(Lys) + L-lysine + ATP = L-lysyl-tRNA(Lys) + AMP + diphosphate. This is Lysine--tRNA ligase from Helicobacter pylori (strain HPAG1).